We begin with the raw amino-acid sequence, 370 residues long: Queuine tRNA-ribosyltransferase (370 aa).

The active-site Proton acceptor is aspartate 89. Residues 89–93, aspartate 143, and glycine 214 contribute to the substrate site; that span reads DSGGF. An RNA binding region spans residues 245–251; the sequence is GVGKPED. Residue aspartate 264 is the Nucleophile of the active site. Positions 269–273 are RNA binding; important for wobble base 34 recognition; that stretch reads TRNAR. Zn(2+)-binding residues include cysteine 302, cysteine 304, cysteine 307, and histidine 333.

This sequence belongs to the queuine tRNA-ribosyltransferase family. In terms of assembly, homodimer. Within each dimer, one monomer is responsible for RNA recognition and catalysis, while the other monomer binds to the replacement base PreQ1. It depends on Zn(2+) as a cofactor.

The catalysed reaction is 7-aminomethyl-7-carbaguanine + guanosine(34) in tRNA = 7-aminomethyl-7-carbaguanosine(34) in tRNA + guanine. It functions in the pathway tRNA modification; tRNA-queuosine biosynthesis. Its function is as follows. Catalyzes the base-exchange of a guanine (G) residue with the queuine precursor 7-aminomethyl-7-deazaguanine (PreQ1) at position 34 (anticodon wobble position) in tRNAs with GU(N) anticodons (tRNA-Asp, -Asn, -His and -Tyr). Catalysis occurs through a double-displacement mechanism. The nucleophile active site attacks the C1' of nucleotide 34 to detach the guanine base from the RNA, forming a covalent enzyme-RNA intermediate. The proton acceptor active site deprotonates the incoming PreQ1, allowing a nucleophilic attack on the C1' of the ribose to form the product. After dissociation, two additional enzymatic reactions on the tRNA convert PreQ1 to queuine (Q), resulting in the hypermodified nucleoside queuosine (7-(((4,5-cis-dihydroxy-2-cyclopenten-1-yl)amino)methyl)-7-deazaguanosine). The sequence is that of Queuine tRNA-ribosyltransferase from Buchnera aphidicola subsp. Acyrthosiphon pisum (strain APS) (Acyrthosiphon pisum symbiotic bacterium).